The chain runs to 139 residues: Thioredoxin H-type (139 aa).

The Thioredoxin domain maps to 20–132 (ELAGGNVHLI…LHKKITAILD (113 aa)). Catalysis depends on nucleophile residues C58 and C61. Residues C58 and C61 are joined by a disulfide bond.

The protein localises to the cytoplasm. In terms of biological role, participates in various redox reactions through the reversible oxidation of the active center dithiol to a disulfide. The H form is known to activate a number of cytosolic enzymes. The polypeptide is Thioredoxin H-type (Populus jackii (Balm of Gilead)).